Here is a 229-residue protein sequence, read N- to C-terminus: Large ribosomal subunit protein bL19cy (229 aa).

The transit peptide at 1–70 directs the protein to the chloroplast; that stretch reads MATSSHLLPQ…DSKKRKEFIA (70 aa).

It belongs to the bacterial ribosomal protein bL19 family. In terms of assembly, part of the 50S ribosomal subunit.

It is found in the plastid. The protein localises to the chloroplast. Its function is as follows. Located at the 30S-50S ribosomal subunit interface and binds directly to 23S ribosomal RNA. In Arabidopsis thaliana (Mouse-ear cress), this protein is Large ribosomal subunit protein bL19cy.